The sequence spans 132 residues: Small ribosomal subunit protein eS24 (132 aa).

The span at 90–100 (RLAKHGLYEKK) shows a compositional bias: basic and acidic residues. The interval 90–132 (RLAKHGLYEKKKTSRKQRKERKNRMKKVRGTAKANVGAGKKKD) is disordered. Residues 101–119 (KTSRKQRKERKNRMKKVRG) are compositionally biased toward basic residues.

Belongs to the eukaryotic ribosomal protein eS24 family. As to quaternary structure, component of the small ribosomal subunit. Part of the small subunit (SSU) processome, composed of more than 70 proteins and the RNA chaperone small nucleolar RNA (snoRNA) U3.

It localises to the cytoplasm. The protein localises to the nucleus. It is found in the nucleolus. In terms of biological role, component of the small ribosomal subunit. The ribosome is a large ribonucleoprotein complex responsible for the synthesis of proteins in the cell. Required for processing of pre-rRNA and maturation of 40S ribosomal subunits. Part of the small subunit (SSU) processome, first precursor of the small eukaryotic ribosomal subunit. During the assembly of the SSU processome in the nucleolus, many ribosome biogenesis factors, an RNA chaperone and ribosomal proteins associate with the nascent pre-rRNA and work in concert to generate RNA folding, modifications, rearrangements and cleavage as well as targeted degradation of pre-ribosomal RNA by the RNA exosome. The polypeptide is Small ribosomal subunit protein eS24 (rps24) (Xenopus laevis (African clawed frog)).